Consider the following 110-residue polypeptide: Coiled-coil-helix-coiled-coil-helix domain-containing protein 5 (110 aa).

The residue at position 1 (M1) is an N-acetylmethionine. CHCH domains are found at residues 9–52 and 55–97; these read ARYC…PIIR and RQAC…QPPR. 4 consecutive short sequence motifs (cx9C motif) follow at residues 12-22, 34-44, 58-68, and 79-89; these read CGRELEQYGQC, CHYLKMSIAQC, CAQPFEAFEEC, and CAEHMRRFLQC. 4 cysteine pairs are disulfide-bonded: C12/C44, C22/C34, C58/C89, and C68/C79.

Monomer.

The protein resides in the mitochondrion intermembrane space. The sequence is that of Coiled-coil-helix-coiled-coil-helix domain-containing protein 5 (CHCHD5) from Homo sapiens (Human).